The sequence spans 563 residues: Arginine--tRNA ligase (563 aa).

The 'HIGH' region motif lies at 121–131 (PNIAKPFSIGH).

Belongs to the class-I aminoacyl-tRNA synthetase family. In terms of assembly, monomer.

Its subcellular location is the cytoplasm. The enzyme catalyses tRNA(Arg) + L-arginine + ATP = L-arginyl-tRNA(Arg) + AMP + diphosphate. The protein is Arginine--tRNA ligase of Streptococcus equi subsp. equi (strain 4047).